The primary structure comprises 364 residues: Abhydrolase domain-containing protein C57A10.08c (364 aa).

Topologically, residues 1–8 (MYFFTISR) are cytoplasmic. The chain crosses the membrane as a helical; Signal-anchor for type II membrane protein span at residues 9-29 (LTSFISYGILGALGILTFLYL). Over 30 to 364 (YDAYLAKSFQ…DKFSTTDHNI (335 aa)) the chain is Lumenal. Ser-183 (charge relay system) is an active-site residue. N-linked (GlcNAc...) asparagine glycosylation is present at Asn-326. His-336 (charge relay system) is an active-site residue.

This sequence belongs to the AB hydrolase superfamily.

The protein localises to the endoplasmic reticulum membrane. This is Abhydrolase domain-containing protein C57A10.08c from Schizosaccharomyces pombe (strain 972 / ATCC 24843) (Fission yeast).